We begin with the raw amino-acid sequence, 851 residues long: DNA mismatch repair protein MutS (851 aa).

614–621 (GPNMGGKS) is an ATP binding site.

It belongs to the DNA mismatch repair MutS family.

Functionally, this protein is involved in the repair of mismatches in DNA. It is possible that it carries out the mismatch recognition step. This protein has a weak ATPase activity. The polypeptide is DNA mismatch repair protein MutS (Yersinia pseudotuberculosis serotype O:1b (strain IP 31758)).